The sequence spans 507 residues: Xylose import ATP-binding protein XylG (507 aa).

2 ABC transporter domains span residues 5-242 (LKMT…VGRE) and 259-504 (LEVK…LSEK). 37-44 (GENGSGKS) is an ATP binding site.

The protein belongs to the ABC transporter superfamily. Xylose importer (TC 3.A.1.2.4) family. In terms of assembly, the complex is composed of two ATP-binding proteins (XylG), two transmembrane proteins (XylH) and a solute-binding protein (XylF).

Its subcellular location is the cell inner membrane. It carries out the reaction D-xylose(out) + ATP + H2O = D-xylose(in) + ADP + phosphate + H(+). In terms of biological role, part of the ABC transporter complex XylFGH involved in xylose import. Responsible for energy coupling to the transport system. The chain is Xylose import ATP-binding protein XylG from Photobacterium profundum (strain SS9).